Reading from the N-terminus, the 396-residue chain is Elongation factor Tu (396 aa).

One can recognise a tr-type G domain in the interval 10 to 206 (KPHVNVGTIG…ALDSYIPTPE (197 aa)). The tract at residues 19 to 26 (GHVDHGKT) is G1. 19–26 (GHVDHGKT) lines the GTP pocket. Thr26 serves as a coordination point for Mg(2+). Positions 60-64 (GITIN) are G2. A G3 region spans residues 81 to 84 (DCPG). Residues 81-85 (DCPGH) and 136-139 (NKCD) each bind GTP. Residues 136 to 139 (NKCD) form a G4 region. The G5 stretch occupies residues 174 to 176 (SAK).

The protein belongs to the TRAFAC class translation factor GTPase superfamily. Classic translation factor GTPase family. EF-Tu/EF-1A subfamily. As to quaternary structure, monomer.

Its subcellular location is the cytoplasm. It catalyses the reaction GTP + H2O = GDP + phosphate + H(+). In terms of biological role, GTP hydrolase that promotes the GTP-dependent binding of aminoacyl-tRNA to the A-site of ribosomes during protein biosynthesis. The sequence is that of Elongation factor Tu from Methylibium petroleiphilum (strain ATCC BAA-1232 / LMG 22953 / PM1).